Reading from the N-terminus, the 282-residue chain is MGKEVMGKKENEMAQEKERPAGSQSLFRGLMLIEILSNYPNGCPLAHLSELAGLNKSTVHRLLQGLQSCGYVTTAPAAGSYRLTTKFIAVGQKALSSLNIIHIAAPHLEALNIATGETINFSSREDDHAILIYKLEPTTGMLRTRAYIGQHMPLYCSAMGKIYMAFGHPDYVKSYWESHQHEIQPLTRNTITELPAMFDELAHIRESGAAMDREENELGVSCIAVPVFDIHGRVPYAVSISLSTSRLKQVGEKNLLKPLRETAQAISNELGFTVRDDLGAIT.

Residues Met1–Pro20 show a composition bias toward basic and acidic residues. The tract at residues Met1–Ala21 is disordered. An HTH iclR-type domain is found at Ser23–Thr85. A DNA-binding region (H-T-H motif) is located at residues Leu45–Gln64. In terms of domain architecture, IclR-ED spans Ile100–Phe272.

Negatively controls the transcription of the yiaKLMNOPQRS operon, which may be involved in the utilization of 2,3-diketo-L-gulonate. This is DNA-binding transcriptional repressor YiaJ (yiaJ) from Escherichia coli (strain K12).